Reading from the N-terminus, the 31-residue chain is Cytochrome b6-f complex subunit 8 (31 aa).

A helical membrane pass occupies residues 5–25 (IVSMAWAALMVVFTFSLSLVI).

Belongs to the PetN family. The 4 large subunits of the cytochrome b6-f complex are cytochrome b6, subunit IV (17 kDa polypeptide, PetD), cytochrome f and the Rieske protein, while the 4 small subunits are PetG, PetL, PetM and PetN. The complex functions as a dimer.

Its subcellular location is the plastid membrane. Its function is as follows. Component of the cytochrome b6-f complex, which mediates electron transfer between photosystem II (PSII) and photosystem I (PSI), cyclic electron flow around PSI, and state transitions. The protein is Cytochrome b6-f complex subunit 8 of Cuscuta gronovii (Common dodder).